Here is a 459-residue protein sequence, read N- to C-terminus: Asparagine--tRNA ligase (459 aa).

It belongs to the class-II aminoacyl-tRNA synthetase family. In terms of assembly, homodimer.

It localises to the cytoplasm. The catalysed reaction is tRNA(Asn) + L-asparagine + ATP = L-asparaginyl-tRNA(Asn) + AMP + diphosphate + H(+). This is Asparagine--tRNA ligase from Pelobacter propionicus (strain DSM 2379 / NBRC 103807 / OttBd1).